The following is a 63-amino-acid chain: Gallinacin-4 (63 aa).

Residues 1–19 (MKILCFFIVLLFVAVHGAV) form the signal peptide. Positions 20–25 (GFSRSP) are excised as a propeptide. 3 disulfide bridges follow: C31-C59, C38-C53, and C43-C60.

The protein belongs to the beta-defensin family. Strong expression in the bone marrow and testis. Widely expressed. Weak expression in the ovarian stroma, but not expressed in the ovarian follicles.

It is found in the secreted. Its subcellular location is the cytoplasmic granule. Has bactericidal activity. Potent activity against S.typhimurium and S.entiriditis. This is Gallinacin-4 (GAL4) from Gallus gallus (Chicken).